The sequence spans 310 residues: MKITTKVLIIGSGPAGLSAAIYTARSALKPILINGMQPGGQLTMTTDVENYPGFAETIQGPWLMEQMSMQAKNVGTEIISDYVERVDLSKRPFKIFTGTGNEYEADSIIICTGAESKWLGIASEQEFRGFGVSSCAICDGFFFKNQEIVVVGGGNSALEEALYLTNHANKVTVVHRRNSFRAEKILQDRLFKNPKISVIWDHIIDEIVGSNKPKAVTGVKIQNVYTNEINLVNCSGVFIAIGHAPNTALFKGQIAIDDDNYIVTQSGSTRTNVEGVFAAGDVQDKIYRQAVTAAASGCMAALEVAKFLNK.

FAD is bound at residue 34-41 (NGMQPGGQ). Cys135 and Cys138 are joined by a disulfide. Position 281-290 (281-290 (DVQDKIYRQA)) interacts with FAD.

It belongs to the class-II pyridine nucleotide-disulfide oxidoreductase family. In terms of assembly, homodimer. Requires FAD as cofactor.

It localises to the cytoplasm. The enzyme catalyses [thioredoxin]-dithiol + NADP(+) = [thioredoxin]-disulfide + NADPH + H(+). The polypeptide is Thioredoxin reductase (trxB) (Rickettsia prowazekii (strain Madrid E)).